We begin with the raw amino-acid sequence, 318 residues long: Forkhead box protein I2 (318 aa).

Positions 1–30 (MATYCDDLGPSSAPPGQAQATAHPPGYEPG) are disordered. The fork-head DNA-binding region spans 102 to 196 (RPPYSYSALI…DNGNFRRKRK (95 aa)).

The protein resides in the nucleus. Its function is as follows. Possible transcriptional activator. In Homo sapiens (Human), this protein is Forkhead box protein I2 (FOXI2).